The following is a 156-amino-acid chain: MPRRRVIGQRKILPDPKFGSELLAKFINVVMVDGKKAVAEKIIYGALDILAEKSGKDRLEVFDTILDNIRPMVEVKSRRVGGSTYQVPVEVRPVRRNALAMRWLVDAARTRGEKSMSQRLAAEMLDASENKGSAVKKREDVHRMAEANKAFAHYRW.

This sequence belongs to the universal ribosomal protein uS7 family. In terms of assembly, part of the 30S ribosomal subunit. Contacts proteins S9 and S11.

One of the primary rRNA binding proteins, it binds directly to 16S rRNA where it nucleates assembly of the head domain of the 30S subunit. Is located at the subunit interface close to the decoding center, probably blocks exit of the E-site tRNA. This Idiomarina loihiensis (strain ATCC BAA-735 / DSM 15497 / L2-TR) protein is Small ribosomal subunit protein uS7.